The chain runs to 301 residues: Pyridoxal 5'-phosphate synthase subunit PdxS (301 aa).

A D-ribose 5-phosphate-binding site is contributed by Asp31. Lys88 (schiff-base intermediate with D-ribose 5-phosphate) is an active-site residue. Residue Gly160 coordinates D-ribose 5-phosphate. Arg172 contributes to the D-glyceraldehyde 3-phosphate binding site. D-ribose 5-phosphate-binding positions include Gly221 and 242–243; that span reads GS. A disordered region spans residues 273-301; sequence EIAKSPGKGMKGQANETLPEEEKLQDRGI. Residues 292 to 301 show a composition bias toward basic and acidic residues; that stretch reads EEEKLQDRGI.

This sequence belongs to the PdxS/SNZ family. In the presence of PdxT, forms a dodecamer of heterodimers.

The enzyme catalyses aldehydo-D-ribose 5-phosphate + D-glyceraldehyde 3-phosphate + L-glutamine = pyridoxal 5'-phosphate + L-glutamate + phosphate + 3 H2O + H(+). Its pathway is cofactor biosynthesis; pyridoxal 5'-phosphate biosynthesis. Its function is as follows. Catalyzes the formation of pyridoxal 5'-phosphate from ribose 5-phosphate (RBP), glyceraldehyde 3-phosphate (G3P) and ammonia. The ammonia is provided by the PdxT subunit. Can also use ribulose 5-phosphate and dihydroxyacetone phosphate as substrates, resulting from enzyme-catalyzed isomerization of RBP and G3P, respectively. This Natronomonas pharaonis (strain ATCC 35678 / DSM 2160 / CIP 103997 / JCM 8858 / NBRC 14720 / NCIMB 2260 / Gabara) (Halobacterium pharaonis) protein is Pyridoxal 5'-phosphate synthase subunit PdxS.